The chain runs to 255 residues: Hydroxyacylglutathione hydrolase (255 aa).

7 residues coordinate Zn(2+): histidine 56, histidine 58, aspartate 60, histidine 61, histidine 114, aspartate 133, and histidine 171.

This sequence belongs to the metallo-beta-lactamase superfamily. Glyoxalase II family. In terms of assembly, monomer. Requires Zn(2+) as cofactor.

The enzyme catalyses an S-(2-hydroxyacyl)glutathione + H2O = a 2-hydroxy carboxylate + glutathione + H(+). Its pathway is secondary metabolite metabolism; methylglyoxal degradation; (R)-lactate from methylglyoxal: step 2/2. Functionally, thiolesterase that catalyzes the hydrolysis of S-D-lactoyl-glutathione to form glutathione and D-lactic acid. This is Hydroxyacylglutathione hydrolase from Ruegeria pomeroyi (strain ATCC 700808 / DSM 15171 / DSS-3) (Silicibacter pomeroyi).